The following is a 270-amino-acid chain: tRNA pseudouridine synthase A (270 aa).

Aspartate 51 serves as the catalytic Nucleophile. Tyrosine 109 contacts substrate.

Belongs to the tRNA pseudouridine synthase TruA family. Homodimer.

The catalysed reaction is uridine(38/39/40) in tRNA = pseudouridine(38/39/40) in tRNA. Its function is as follows. Formation of pseudouridine at positions 38, 39 and 40 in the anticodon stem and loop of transfer RNAs. The polypeptide is tRNA pseudouridine synthase A (Burkholderia orbicola (strain MC0-3)).